The primary structure comprises 318 residues: Acetyl-coenzyme A carboxylase carboxyl transferase subunit alpha (318 aa).

Positions 34 to 295 (SIEEEITKLR…KATIKQQLAQ (262 aa)) constitute a CoA carboxyltransferase C-terminal domain.

It belongs to the AccA family. As to quaternary structure, acetyl-CoA carboxylase is a heterohexamer composed of biotin carboxyl carrier protein (AccB), biotin carboxylase (AccC) and two subunits each of ACCase subunit alpha (AccA) and ACCase subunit beta (AccD).

Its subcellular location is the cytoplasm. It carries out the reaction N(6)-carboxybiotinyl-L-lysyl-[protein] + acetyl-CoA = N(6)-biotinyl-L-lysyl-[protein] + malonyl-CoA. Its pathway is lipid metabolism; malonyl-CoA biosynthesis; malonyl-CoA from acetyl-CoA: step 1/1. Its function is as follows. Component of the acetyl coenzyme A carboxylase (ACC) complex. First, biotin carboxylase catalyzes the carboxylation of biotin on its carrier protein (BCCP) and then the CO(2) group is transferred by the carboxyltransferase to acetyl-CoA to form malonyl-CoA. The polypeptide is Acetyl-coenzyme A carboxylase carboxyl transferase subunit alpha (Pseudoalteromonas atlantica (strain T6c / ATCC BAA-1087)).